The primary structure comprises 207 residues: Ion-translocating oxidoreductase complex subunit G (207 aa).

The chain crosses the membrane as a helical span at residues 11 to 31 (GILLGFIALLCTIISAGIFFL). Position 175 is an FMN phosphoryl threonine (Thr175).

It belongs to the RnfG family. In terms of assembly, the complex is composed of six subunits: RnfA, RnfB, RnfC, RnfD, RnfE and RnfG. FMN is required as a cofactor.

The protein localises to the cell inner membrane. Part of a membrane-bound complex that couples electron transfer with translocation of ions across the membrane. In Haemophilus influenzae (strain ATCC 51907 / DSM 11121 / KW20 / Rd), this protein is Ion-translocating oxidoreductase complex subunit G.